Reading from the N-terminus, the 677-residue chain is MQPTLLLSLLGAVGLAAVNSMPVDNRNHNEGMVTRCIIEVLSNALSKSSAPPITPECRQVLKTSRKDVKDKETTENENTKFEVRLLRDPADASEAHESSSRGEAGAPGEEDIQGPTKADTEKWAEGGGHSRERADEPQWSLYPSDSQVSEEVKTRHSEKSQREDEEEEEGENYQKGERGEDSSEEKHLEEPGETQNAFLNERKQASAIKKEELVARSETHAAGHSQEKTHSREKSSQESGEETGSQENHPQESKGQPRSQEESEEGEEDATSEVDKRRTRPRHHHGRSRPDRSSQGGSLPSEEKGHPQEESEESNVSMASLGEKRDHHSTHYRASEEEPEYGEEIKGYPGVQAPEDLEWERYRGRGSEEYRAPRPQSEESWDEEDKRNYPSLELDKMAHGYGEESEEERGLEPGKGRHHRGRGGEPRAYFMSDTREEKRFLGEGHHRVQENQMDKARRHPQGAWKELDRNYLNYGEEGAPGKWQQQGDLQDTKENREEARFQDKQYSSHHTAEKRKRLGELFNPYYDPLQWKSSHFERRDNMNDNFLEGEEENELTLNEKNFFPEYNYDWWEKKPFSEDVNWGYEKRNLARVPKLDLKRQYDRVAQLDQLLHYRKKSAEFPDFYDSEEPVSTHQEAENEKDRADQTVLTEDEKKELENLAAMDLELQKIAEKFSQRG.

An N-terminal signal peptide occupies residues 1 to 20; sequence MQPTLLLSLLGAVGLAAVNS. Residues Cys-36 and Cys-57 are joined by a disulfide bond. Basic and acidic residues-rich tracts occupy residues 64–100 and 118–136; these read SRKD…ESSS and ADTE…RADE. The disordered stretch occupies residues 64 to 463; the sequence is SRKDVKDKET…DKARRHPQGA (400 aa). Thr-79 bears the Phosphothreonine mark. Ser-93, Ser-99, and Ser-100 each carry phosphoserine. A glycan (O-linked (Xyl...) (chondroitin sulfate) serine) is linked at Ser-93. The segment at 116–120 is O-glycosylated at one site; it reads TKADT. Ser-130 is modified (phosphoserine; by FAM20C). Ser-149 is modified (phosphoserine). Basic and acidic residues-rich tracts occupy residues 150-162, 172-190, and 200-236; these read EEVK…KSQR, NYQK…HLEE, and NERK…EKSS. Position 183 is a phosphoserine (Ser-183). Phosphoserine; by FAM20C is present on Ser-225. Residue Ser-239 is glycosylated (O-linked (Xyl...) (chondroitin sulfate) serine). A phosphoserine mark is found at Ser-259 and Ser-263. Over residues 262–272 the composition is skewed to acidic residues; the sequence is ESEEGEEDATS. Residues 277-287 show a composition bias toward basic residues; that stretch reads RRTRPRHHHGR. Ser-293, Ser-294, Ser-311, and Ser-335 each carry phosphoserine. Tyr-341 bears the Sulfotyrosine mark. The segment covering 359–372 has biased composition (basic and acidic residues); the sequence is WERYRGRGSEEYRA. Phosphoserine; by FAM20C is present on residues Ser-367, Ser-377, and Ser-380. Basic and acidic residues-rich tracts occupy residues 384–415 and 433–455; these read EDKR…EPGK and DTRE…QMDK. Tyr-401 carries the post-translational modification Phosphotyrosine. Position 405 is a phosphoserine (Ser-405). Tyr-474 carries the post-translational modification Sulfotyrosine. A disordered region spans residues 475 to 512; sequence GEEGAPGKWQQQGDLQDTKENREEARFQDKQYSSHHTA. A compositionally biased stretch (basic and acidic residues) spans 490 to 503; sequence QDTKENREEARFQD. Phosphoserine occurs at positions 533 and 534. Sulfotyrosine is present on Tyr-566. A Phosphoserine modification is found at Ser-617. The tract at residues 622-653 is disordered; the sequence is DFYDSEEPVSTHQEAENEKDRADQTVLTEDEK. At Tyr-624 the chain carries Sulfotyrosine. Phosphoserine is present on residues Ser-626 and Ser-631. Over residues 634–653 the composition is skewed to basic and acidic residues; that stretch reads QEAENEKDRADQTVLTEDEK.

This sequence belongs to the chromogranin/secretogranin protein family. As to quaternary structure, interacts with ITPR1 in the secretory granules. Post-translationally, extensively processed by limited proteolysis at conserved basic residues. Alternative processing are seen in different tissues. O-glycosylated. As to expression, detected in cerebrospinal fluid and urine (at protein level). Expressed in the adrenal medulla, and in pheochromocytoma. Not expressed in liver.

It localises to the secreted. Its function is as follows. Secretogranin-1 is a neuroendocrine secretory granule protein, which may be the precursor for other biologically active peptides. The protein is Secretogranin-1 (CHGB) of Homo sapiens (Human).